The sequence spans 744 residues: NAD(P)H-quinone oxidoreductase subunit 5, chloroplastic (744 aa).

16 helical membrane passes run Trp9–Phe29, Trp40–Ile60, Ile89–Ile109, Phe125–Ile145, Ile147–Thr167, Gly185–Phe205, Asn219–Ala239, Thr258–Ala278, Ile290–Gln312, Leu327–Ile347, Ala354–Cys374, Thr396–Ser416, Trp425–Tyr445, Leu549–Phe569, Val608–Val628, and Tyr724–Phe744.

It belongs to the complex I subunit 5 family. In terms of assembly, NDH is composed of at least 16 different subunits, 5 of which are encoded in the nucleus.

It is found in the plastid. Its subcellular location is the chloroplast thylakoid membrane. It catalyses the reaction a plastoquinone + NADH + (n+1) H(+)(in) = a plastoquinol + NAD(+) + n H(+)(out). The catalysed reaction is a plastoquinone + NADPH + (n+1) H(+)(in) = a plastoquinol + NADP(+) + n H(+)(out). Its function is as follows. NDH shuttles electrons from NAD(P)H:plastoquinone, via FMN and iron-sulfur (Fe-S) centers, to quinones in the photosynthetic chain and possibly in a chloroplast respiratory chain. The immediate electron acceptor for the enzyme in this species is believed to be plastoquinone. Couples the redox reaction to proton translocation, and thus conserves the redox energy in a proton gradient. The chain is NAD(P)H-quinone oxidoreductase subunit 5, chloroplastic (ndhF) from Mutisia acuminata.